A 120-amino-acid chain; its full sequence is NAD(P)H-quinone oxidoreductase subunit 3, chloroplastic (120 aa).

3 helical membrane-spanning segments follow: residues 14 to 34 (LIISILIPILAFLISGILAPI), 64 to 84 (MFALVFVVFDVETVFLYPWAM), and 88 to 108 (VLGVSVFIEALIFVLILIVGS).

It belongs to the complex I subunit 3 family. In terms of assembly, NDH is composed of at least 16 different subunits, 5 of which are encoded in the nucleus.

The protein localises to the plastid. The protein resides in the chloroplast thylakoid membrane. The enzyme catalyses a plastoquinone + NADH + (n+1) H(+)(in) = a plastoquinol + NAD(+) + n H(+)(out). It catalyses the reaction a plastoquinone + NADPH + (n+1) H(+)(in) = a plastoquinol + NADP(+) + n H(+)(out). Functionally, NDH shuttles electrons from NAD(P)H:plastoquinone, via FMN and iron-sulfur (Fe-S) centers, to quinones in the photosynthetic chain and possibly in a chloroplast respiratory chain. The immediate electron acceptor for the enzyme in this species is believed to be plastoquinone. Couples the redox reaction to proton translocation, and thus conserves the redox energy in a proton gradient. This chain is NAD(P)H-quinone oxidoreductase subunit 3, chloroplastic, found in Cicer arietinum (Chickpea).